We begin with the raw amino-acid sequence, 239 residues long: Purine nucleoside phosphorylase DeoD-type 1 (239 aa).

H5 provides a ligand contact to a purine D-ribonucleoside. Phosphate is bound by residues G21, R25, R44, and R88 to S91. Residues E180–E182 and S204–D205 each bind a purine D-ribonucleoside. Residue D205 is the Proton donor of the active site.

This sequence belongs to the PNP/UDP phosphorylase family. Homohexamer; trimer of homodimers.

It catalyses the reaction a purine D-ribonucleoside + phosphate = a purine nucleobase + alpha-D-ribose 1-phosphate. It carries out the reaction a purine 2'-deoxy-D-ribonucleoside + phosphate = a purine nucleobase + 2-deoxy-alpha-D-ribose 1-phosphate. Functionally, catalyzes the reversible phosphorolytic breakdown of the N-glycosidic bond in the beta-(deoxy)ribonucleoside molecules, with the formation of the corresponding free purine bases and pentose-1-phosphate. This Vibrio parahaemolyticus serotype O3:K6 (strain RIMD 2210633) protein is Purine nucleoside phosphorylase DeoD-type 1.